We begin with the raw amino-acid sequence, 495 residues long: MSYPQFGYPYSSTPQFLMTTNSLSTCCESNGRSLSDSAAAASAQTPVYCPVYESRLLATARHELNSAAALGVYGSPYTSTQGYGNYVTYGADAPSFYSLNAFESKDGTGSAHAGIPQTAAYYPYEHTLSQYQYDRYGTMDGSTRRKNATRETTSTLKAWLQEHRKNPYPTKGEKIMLAIITKMTLTQVSTWFANARRRLKKENKMTWPPRNKCSDEKRPYDEEEEEEEDSQKATIKNEKKTVDEEIHREEKALDLSDLEDFDTIESESSECELKQPFHHQPQDGHQLRQRDCVNDHCKEVILKMPITSTATQELDRTKICHKTGLDQCEQDLLRGRQRGGGESKSCFQQQQILDSKPRIWSLAHTATSLNQTEYPSCMLKHQGLSSPSSSSSSSAVSTPVCVIDRRQDSPVTSLRNWVDGVFHDPLFRHSTLNQALTNTTVSWATTKGTLIDSGSLGRSVGNSTNVIKGQLPNLPHDTNKEFIAFQTSGSKMFCS.

Positions Gly-141 to Asn-203 form a DNA-binding region, homeobox; TALE-type. The segment at Asn-203–Glu-245 is disordered. A compositionally biased stretch (basic and acidic residues) spans Ile-235–Glu-245.

This sequence belongs to the TALE/IRO homeobox family.

It is found in the nucleus. Its function is as follows. Acts partially redundantly with other irx members in neural patterning. Required for formation of the posterior forebrain, midbrain, hindbrain, and to a lesser extent, spinal cord. Patterns the neuroectoderm in both the anterior/posterior and dorsal/ventral axes. Does not appear to play a role in pronephros kidney development. In Xenopus laevis (African clawed frog), this protein is Iroquois-class homeodomain protein irx-4-B (irx4-b).